A 510-amino-acid polypeptide reads, in one-letter code: NAD(P)H-quinone oxidoreductase subunit 2 A, chloroplastic (510 aa).

A run of 13 helical transmembrane segments spans residues Leu24–Leu44, Met57–Phe77, Ile99–Ile119, Met124–Cys144, Leu149–Tyr169, Tyr183–Gly203, Pro227–Ala247, Trp295–Ile315, Met323–Asp343, Tyr354–Leu374, Ala395–Phe415, Leu418–Leu438, and Leu482–Ile502.

This sequence belongs to the complex I subunit 2 family. NDH is composed of at least 16 different subunits, 5 of which are encoded in the nucleus.

It localises to the plastid. It is found in the chloroplast thylakoid membrane. The enzyme catalyses a plastoquinone + NADH + (n+1) H(+)(in) = a plastoquinol + NAD(+) + n H(+)(out). The catalysed reaction is a plastoquinone + NADPH + (n+1) H(+)(in) = a plastoquinol + NADP(+) + n H(+)(out). Functionally, NDH shuttles electrons from NAD(P)H:plastoquinone, via FMN and iron-sulfur (Fe-S) centers, to quinones in the photosynthetic chain and possibly in a chloroplast respiratory chain. The immediate electron acceptor for the enzyme in this species is believed to be plastoquinone. Couples the redox reaction to proton translocation, and thus conserves the redox energy in a proton gradient. In Populus trichocarpa (Western balsam poplar), this protein is NAD(P)H-quinone oxidoreductase subunit 2 A, chloroplastic.